Reading from the N-terminus, the 368-residue chain is MAAAAEERMAEEGGGGQGDGGSSLASGSTQRQPPPPAPQHPQPGSQALPAPALAPDQLPQNNTLVALPIVAIENILSFMSYDEISQLRLVCKRMDLVCQRMLNQGFLKVERYHNLCQKQVKAQLPRRESERRNHSLARHADILAAVETRLSLLNMTFMKYVDSNLCCFIPGKVIDEIYRVLRYVNSTRAPQRAHEVLQELRDISSMAMEYFDEKIVPILKRKLPGSDVSGRLMGSPPVPGPSAALTTMQLFSKQNPSRQEVTKLQQQVKTNGAGVTVLRREISELRTKVQEQQKQLQDQDQKLLEQTQIIGEQNARLAELERKLREVMESAVGNSSGSGQNEESPRKRKKATEAIDSLRKSKRLRNRK.

Residues 1 to 11 (MAAAAEERMAE) show a composition bias toward basic and acidic residues. The interval 1–56 (MAAAAEERMAEEGGGGQGDGGSSLASGSTQRQPPPPAPQHPQPGSQALPAPALAPD) is disordered. A compositionally biased stretch (gly residues) spans 12–21 (EGGGGQGDGG). A compositionally biased stretch (low complexity) spans 22–31 (SSLASGSTQR). Residues 32–41 (QPPPPAPQHP) are compositionally biased toward pro residues. The span at 42–56 (QPGSQALPAPALAPD) shows a compositional bias: low complexity. Residues 61–109 (NNTLVALPIVAIENILSFMSYDEISQLRLVCKRMDLVCQRMLNQGFLKV) form the F-box domain. Residues S235 and S242 each carry the phosphoserine modification. T270 is subject to Phosphothreonine. The interval 328–368 (MESAVGNSSGSGQNEESPRKRKKATEAIDSLRKSKRLRNRK) is disordered. Residues 333–342 (GNSSGSGQNE) show a composition bias toward low complexity. The residue at position 344 (S344) is a Phosphoserine.

Part of a SCF (SKP1-cullin-F-box) protein ligase complex.

Its subcellular location is the chromosome. It is found in the centromere. The protein resides in the kinetochore. Probably recognizes and binds to some phosphorylated proteins and promotes their ubiquitination and degradation. This chain is F-box only protein 28 (FBXO28), found in Homo sapiens (Human).